A 125-amino-acid chain; its full sequence is MIYGIGTDIVSLKRIVRLSKKFGQAFAERILTPEELLEFPQAGKPVNYLAKRFAAKEAFAKAVGTGIRGAVSFRNIGIGHDALGKPEFFYAPALSKWLEEQGISRVSLSMSDEEDTVLAFAVAEK.

2 residues coordinate Mg(2+): Asp-8 and Glu-57.

The protein belongs to the P-Pant transferase superfamily. AcpS family. It depends on Mg(2+) as a cofactor.

The protein resides in the cytoplasm. The enzyme catalyses apo-[ACP] + CoA = holo-[ACP] + adenosine 3',5'-bisphosphate + H(+). Functionally, transfers the 4'-phosphopantetheine moiety from coenzyme A to a Ser of acyl-carrier-protein. In Neisseria meningitidis serogroup A / serotype 4A (strain DSM 15465 / Z2491), this protein is Holo-[acyl-carrier-protein] synthase.